A 219-amino-acid polypeptide reads, in one-letter code: Ribose-5-phosphate isomerase A (219 aa).

Residues 28 to 31 (SGST), 81 to 84 (DGAD), and 94 to 97 (KGGG) each bind substrate. The active-site Proton acceptor is Glu103. Residue Lys121 participates in substrate binding.

Belongs to the ribose 5-phosphate isomerase family. In terms of assembly, homodimer.

The enzyme catalyses aldehydo-D-ribose 5-phosphate = D-ribulose 5-phosphate. The protein operates within carbohydrate degradation; pentose phosphate pathway; D-ribose 5-phosphate from D-ribulose 5-phosphate (non-oxidative stage): step 1/1. Functionally, catalyzes the reversible conversion of ribose-5-phosphate to ribulose 5-phosphate. The protein is Ribose-5-phosphate isomerase A of Histophilus somni (strain 2336) (Haemophilus somnus).